Here is a 258-residue protein sequence, read N- to C-terminus: UPF0246 protein YaaA (258 aa).

It belongs to the UPF0246 family.

In Escherichia coli (strain SMS-3-5 / SECEC), this protein is UPF0246 protein YaaA.